A 268-amino-acid polypeptide reads, in one-letter code: Putative type I specificity subunit S.MpnORF365P (268 aa).

Belongs to the type-I restriction system S methylase family. As to quaternary structure, the methyltransferase is composed of M and S polypeptides.

Functionally, the specificity (S) subunit of a type I methyltransferase (MTase); this subunit dictates DNA sequence specificity. The single R subunit has multiple frameshifts and is probably not expressed. The sequence is that of Putative type I specificity subunit S.MpnORF365P from Mycoplasma pneumoniae (strain ATCC 29342 / M129 / Subtype 1) (Mycoplasmoides pneumoniae).